The following is a 345-amino-acid chain: uncharacterized protein (345 aa).

A domain (TBDR plug) is located at residue Met1. Residues 1–345 form the TBDR beta-barrel domain; the sequence is MDLGPIYNTR…EVILNTKIEF (345 aa). Residues 328–345 carry the TonB C-terminal box motif; sequence PVALGYAREVILNTKIEF.

The protein belongs to the TonB-dependent receptor family.

It localises to the cell outer membrane. This is an uncharacterized protein from Haemophilus influenzae (strain ATCC 51907 / DSM 11121 / KW20 / Rd).